Reading from the N-terminus, the 472-residue chain is MAGQTLYDKLWNAHEVTKRDDGSSLIYIDRHLLHEVTSPQAFEGLELANRAPWRLSANIASPDHNVPTVTKERSEGVAGIKDKVSRLQVLTLDDNCAKFDIAEFTINDARQGILHVVGPEQGLVLPGMTVVCGDSHTATHGALGCLAHGIGTSEVEHVLATQCLIQKKSKNMQIRVTGELGAGVTSKDVVLAIIAKIGTAGGTGHAIEFAGQVFEDMSMEGRMTVCNMAIEAGARVGMVAVDDTTIDYVKGRPYAPNESQWQQAEAYWRTFYSDDDAVFDSVIEIDGSQIAPQVSWGTSPEMVVDITQSVPTPDQAIDEAQEEGWLRAYTYMGLEAGQKITDIQLDRIFIGSCTNSRIEDLRDAAAVIKGRKVADTIKEAIVVAGSGQVKLQAEAEGLDALFTDAGFEWREPGCSMCLAMNADKLEPQEHCASTSNRNFEGRQGNGGRTHLVSPAMAAAAALAGHFVDVRTF.

The [4Fe-4S] cluster site is built by Cys353, Cys414, and Cys417.

It belongs to the aconitase/IPM isomerase family. LeuC type 1 subfamily. Heterodimer of LeuC and LeuD. The cofactor is [4Fe-4S] cluster.

It catalyses the reaction (2R,3S)-3-isopropylmalate = (2S)-2-isopropylmalate. Its pathway is amino-acid biosynthesis; L-leucine biosynthesis; L-leucine from 3-methyl-2-oxobutanoate: step 2/4. In terms of biological role, catalyzes the isomerization between 2-isopropylmalate and 3-isopropylmalate, via the formation of 2-isopropylmaleate. This chain is 3-isopropylmalate dehydratase large subunit, found in Psychrobacter cryohalolentis (strain ATCC BAA-1226 / DSM 17306 / VKM B-2378 / K5).